The following is a 146-amino-acid chain: Gonadotropin subunit beta-2 (146 aa).

Residues 1 to 28 (TGTPVKILVVRNILLLLFCLVVLLVFAQ) form the signal peptide. Cystine bridges form between Cys-35-Cys-83, Cys-49-Cys-98, Cys-52-Cys-136, Cys-60-Cys-114, Cys-64-Cys-116, and Cys-119-Cys-126. N-linked (GlcNAc...) asparagine glycosylation occurs at Asn-39.

Belongs to the glycoprotein hormones subunit beta family. In terms of assembly, heterodimer of an alpha and a beta chain.

It is found in the secreted. Its function is as follows. Involved in gametogenesis and steroidogenesis. The polypeptide is Gonadotropin subunit beta-2 (cgbb) (Ctenopharyngodon idella (Grass carp)).